Here is a 308-residue protein sequence, read N- to C-terminus: Ava biosynthesis cluster protein O (308 aa).

It participates in secondary metabolite biosynthesis. Part of the cluster that mediates the biosynthesis of a highly modified cyclo-arginine-tryptophan dipeptide (cRW). The first step of the pathway is perfornmed by the arginine-containing cyclodipeptide synthase (RCPDS) avaA that acts as the scaffold-generating enzyme and is responsible for formation of the cyclo-Arg-Trp (cRW) diketopiperazine. AvaB then acts as a multifunctional flavoenzyme that is responsible for generating the cyclo-Arg-formylkynurenine DKP, which can be deformylated by avaC. AvaB then further catalyzes an additional N-oxidation followed by cyclization and dehydration. The next step is an N-acetylation of the guanidine group catalyzed by the arginine N-acetyltransferase avaD. The roles of the additional enzymes identified within the ava cluster still have to be determined. The polypeptide is Ava biosynthesis cluster protein O (Aspergillus versicolor).